We begin with the raw amino-acid sequence, 123 residues long: Small ribosomal subunit protein uS13 (123 aa).

The disordered stretch occupies residues histidine 93–lysine 123. Positions alanine 108 to lysine 123 are enriched in basic residues.

It belongs to the universal ribosomal protein uS13 family. As to quaternary structure, part of the 30S ribosomal subunit. Forms a loose heterodimer with protein S19. Forms two bridges to the 50S subunit in the 70S ribosome.

Located at the top of the head of the 30S subunit, it contacts several helices of the 16S rRNA. In the 70S ribosome it contacts the 23S rRNA (bridge B1a) and protein L5 of the 50S subunit (bridge B1b), connecting the 2 subunits; these bridges are implicated in subunit movement. Contacts the tRNAs in the A and P-sites. This chain is Small ribosomal subunit protein uS13, found in Leuconostoc citreum (strain KM20).